The primary structure comprises 388 residues: Aldolase vrtJ (388 aa).

The residue at position 241 (lysine 241) is an N6-(pyridoxal phosphate)lysine.

The protein belongs to the threonine aldolase family. Pyridoxal 5'-phosphate is required as a cofactor.

The protein operates within secondary metabolite biosynthesis; terpenoid biosynthesis. Its function is as follows. Aldolase; part of the gene cluster that mediates the biosynthesis of viridicatumtoxin, a tetracycline-like fungal meroterpenoid with a unique, fused spirobicyclic ring system. The first step of the pathway is the production of the malonamoyl-CoA starter unit for the polyketide synthase vrtA. The aldolase vrtJ may be involved in the synthesis of the malonamate substrate for malonamoyl-CoA synthetase vrtB. The polyketide synthase vrtA then may utilize the malonamoyl-CoA starter unit, followed by sequential condensation of eight malonyl-CoA units to form the polyketide backbone. The cyclization of the last ring could be mediated by the lactamase-like protein vrtG. The proposed post-PKS tailoring steps are a hydroxylation at C5 catalyzed the cytochrome P450 monooxygenase vrtE, a hydroxylation at C12a catalyzed by VrtH and/or VrtI, and an O-methylation by the O-methyltransferase vrtF. VrtC is then proposed to catalyze the transfer of a geranyl group synthesized by vrtD to the aromatic C ring of the tetracyclic polyketide intermediate of viridicatumtoxin to yield previridicatumtoxin. Finally, the cytochrome P450 monooxygenase vrtK catalyzes the spirocyclization of the geranyl moiety of previridicatumtoxin to afford viridicatumtoxin. The sequence is that of Aldolase vrtJ from Penicillium aethiopicum.